Consider the following 289-residue polypeptide: Mas-related G-protein coupled receptor member G (289 aa).

At 1–13 the chain is on the extracellular side; that stretch reads MFSIFNIWGTFNK. A helical membrane pass occupies residues 14-34; that stretch reads VLFFLSLTVSLAGLVGNALLL. Residues 35–52 are Cytoplasmic-facing; the sequence is WHLGLHIKKGPFNTYLLH. A helical transmembrane segment spans residues 53 to 73; it reads LAAADFLFLSCQVGFSIATIV. Over 74-78 the chain is Extracellular; sequence SGHED. The chain crosses the membrane as a helical span at residues 79–99; that stretch reads TLYFPVTFLWFAVGLWLLAAF. Residues 100-120 lie on the Cytoplasmic side of the membrane; sequence SVDCCLAYMFPSFCSPNRRPR. The chain crosses the membrane as a helical span at residues 121 to 141; the sequence is FTSVVLCLVIWALTMPAVLLP. The Extracellular segment spans residues 142 to 164; that stretch reads ANACGLLKNGMSLLVCLKYHWTS. The chain crosses the membrane as a helical span at residues 165–185; it reads VTWLAVLSGMACGASKFLLIF. At 186–199 the chain is on the cytoplasmic side; the sequence is GNCCSSQPPPKFCK. The helical transmembrane segment at 200-220 threads the bilayer; the sequence is LAQCSGILLFFCRLPLVVYWC. Residues 221 to 222 lie on the Extracellular side of the membrane; that stretch reads LR. The helical transmembrane segment at 223-243 threads the bilayer; it reads PVLKFLLPFFFPLATLLACID. Residues 244 to 289 lie on the Cytoplasmic side of the membrane; it reads SSAKPLLYYMKGRQLRKDPLQVALNRALGEESQSGLGGLSLPMHQV.

Belongs to the G-protein coupled receptor 1 family. Mas subfamily.

It localises to the cell membrane. Its function is as follows. Orphan receptor. May regulate nociceptor function and/or development, including the sensation or modulation of pain. The sequence is that of Mas-related G-protein coupled receptor member G (Mrgprg) from Mus musculus (Mouse).